The chain runs to 356 residues: Putative KilA-N domain-containing protein R878 (356 aa).

Over residues 1 to 12 (MKVRKSNNKPLK) the composition is skewed to basic residues. Positions 1–114 (MKVRKSNNKP…DDDGSDNNVY (114 aa)) are disordered. Residues 14–46 (SASFTSGTKTGSKSAKSVNSGSKSMKSTKSSSK) are compositionally biased toward low complexity. Residues 66–114 (SDNDELSDNEISDNESSDDDEISDNESSDDDEISDNEISDDDGSDNNVY) show a composition bias toward acidic residues. Positions 130–239 (NYSKGKFGNF…VRIGFCMEEW (110 aa)) constitute a KilA-N domain.

The sequence is that of Putative KilA-N domain-containing protein R878 from Acanthamoeba polyphaga (Amoeba).